Reading from the N-terminus, the 258-residue chain is Eukaryotic translation initiation factor 3 subunit J (258 aa).

The segment covering 1-11 has biased composition (low complexity); the sequence is MAAAAAAAGDS. The disordered stretch occupies residues 1–108; sequence MAAAAAAAGD…LEEPEEPKVL (108 aa). The residue at position 2 (Ala2) is an N-acetylalanine. A sufficient for interaction with EIF3B region spans residues 2 to 69; that stretch reads AAAAAAAGDS…KEEAEVKPEV (68 aa). A phosphoserine mark is found at Ser11, Ser13, and Ser20. A compositionally biased stretch (acidic residues) spans 40-59; it reads EGEDEDEDVKDNWDDDDDEK. Residues 60-106 show a composition bias toward basic and acidic residues; the sequence is KEEAEVKPEVKISEKKKIAEKIKEKERQQKKRQEEIKKRLEEPEEPK. The stretch at 70–135 forms a coiled coil; that stretch reads KISEKKKIAE…ESDLELAKET (66 aa). Lys106 participates in a covalent cross-link: Glycyl lysine isopeptide (Lys-Gly) (interchain with G-Cter in SUMO2). Residue Thr109 is modified to Phosphothreonine. The residue at position 127 (Ser127) is a Phosphoserine. Positions 217–238 are disordered; that stretch reads SKAKKKKKGVVPGGGLKATMKD. The segment at 243–258 is promotes stable association with the 40S ribosome; that stretch reads YGGYDGGYVQDYEDFM. Position 254 is a phosphotyrosine (Tyr254).

As to quaternary structure, component of the eukaryotic translation initiation factor 3 (eIF-3) complex, which is composed of 13 subunits: EIF3A, EIF3B, EIF3C, EIF3D, EIF3E, EIF3F, EIF3G, EIF3H, EIF3I, EIF3J, EIF3K, EIF3L and EIF3M. The eIF-3 complex appears to include 3 stable modules: module A is composed of EIF3A, EIF3B, EIF3G and EIF3I; module B is composed of EIF3F, EIF3H, and EIF3M; and module C is composed of EIF3C, EIF3D, EIF3E, EIF3K and EIF3L. EIF3C of module C binds EIF3B of module A and EIF3H of module B, thereby linking the three modules. EIF3J is a labile subunit that binds to the eIF-3 complex via EIF3B. The eIF-3 complex interacts with RPS6KB1 under conditions of nutrient depletion. Mitogenic stimulation leads to binding and activation of a complex composed of MTOR and RPTOR, leading to phosphorylation and release of RPS6KB1 and binding of EIF4B to eIF-3. Phosphorylated. Phosphorylation is enhanced upon serum stimulation.

It is found in the cytoplasm. Component of the eukaryotic translation initiation factor 3 (eIF-3) complex, which is required for several steps in the initiation of protein synthesis. The eIF-3 complex associates with the 40S ribosome and facilitates the recruitment of eIF-1, eIF-1A, eIF-2:GTP:methionyl-tRNAi and eIF-5 to form the 43S pre-initiation complex (43S PIC). The eIF-3 complex stimulates mRNA recruitment to the 43S PIC and scanning of the mRNA for AUG recognition. The eIF-3 complex is also required for disassembly and recycling of post-termination ribosomal complexes and subsequently prevents premature joining of the 40S and 60S ribosomal subunits prior to initiation. The eIF-3 complex specifically targets and initiates translation of a subset of mRNAs involved in cell proliferation, including cell cycling, differentiation and apoptosis, and uses different modes of RNA stem-loop binding to exert either translational activation or repression. This chain is Eukaryotic translation initiation factor 3 subunit J, found in Homo sapiens (Human).